Consider the following 201-residue polypeptide: Holliday junction branch migration complex subunit RuvA (201 aa).

Positions 1-64 (MIGRLHGKII…EDAHLLFGFA (64 aa)) are domain I. The tract at residues 65-143 (QKQDRTLFRE…GVAQSDFFEE (79 aa)) is domain II. A flexible linker region spans residues 144 to 154 (HSVETIVATHS). A domain III region spans residues 154-201 (SHDPADEARDALVALGYKLADAEKMIKKVNKAGATSEQLIREALKASL).

The protein belongs to the RuvA family. In terms of assembly, homotetramer. Forms an RuvA(8)-RuvB(12)-Holliday junction (HJ) complex. HJ DNA is sandwiched between 2 RuvA tetramers; dsDNA enters through RuvA and exits via RuvB. An RuvB hexamer assembles on each DNA strand where it exits the tetramer. Each RuvB hexamer is contacted by two RuvA subunits (via domain III) on 2 adjacent RuvB subunits; this complex drives branch migration. In the full resolvosome a probable DNA-RuvA(4)-RuvB(12)-RuvC(2) complex forms which resolves the HJ.

It localises to the cytoplasm. Functionally, the RuvA-RuvB-RuvC complex processes Holliday junction (HJ) DNA during genetic recombination and DNA repair, while the RuvA-RuvB complex plays an important role in the rescue of blocked DNA replication forks via replication fork reversal (RFR). RuvA specifically binds to HJ cruciform DNA, conferring on it an open structure. The RuvB hexamer acts as an ATP-dependent pump, pulling dsDNA into and through the RuvAB complex. HJ branch migration allows RuvC to scan DNA until it finds its consensus sequence, where it cleaves and resolves the cruciform DNA. The sequence is that of Holliday junction branch migration complex subunit RuvA from Actinobacillus pleuropneumoniae serotype 7 (strain AP76).